The primary structure comprises 348 residues: Phosphoribosylformylglycinamidine cyclo-ligase (348 aa).

Belongs to the AIR synthase family.

The protein localises to the cytoplasm. The enzyme catalyses 2-formamido-N(1)-(5-O-phospho-beta-D-ribosyl)acetamidine + ATP = 5-amino-1-(5-phospho-beta-D-ribosyl)imidazole + ADP + phosphate + H(+). It functions in the pathway purine metabolism; IMP biosynthesis via de novo pathway; 5-amino-1-(5-phospho-D-ribosyl)imidazole from N(2)-formyl-N(1)-(5-phospho-D-ribosyl)glycinamide: step 2/2. The protein is Phosphoribosylformylglycinamidine cyclo-ligase of Geotalea uraniireducens (strain Rf4) (Geobacter uraniireducens).